The following is a 427-amino-acid chain: 3-phosphoshikimate 1-carboxyvinyltransferase (427 aa).

Lys-20, Ser-21, and Arg-25 together coordinate 3-phosphoshikimate. Residue Lys-20 coordinates phosphoenolpyruvate. Phosphoenolpyruvate-binding residues include Gly-92 and Arg-120. Residues Ser-166, Gln-168, Asp-312, and Lys-339 each coordinate 3-phosphoshikimate. Gln-168 provides a ligand contact to phosphoenolpyruvate. Asp-312 (proton acceptor) is an active-site residue. Phosphoenolpyruvate contacts are provided by Arg-343 and Arg-385.

It belongs to the EPSP synthase family. Monomer.

It localises to the cytoplasm. It catalyses the reaction 3-phosphoshikimate + phosphoenolpyruvate = 5-O-(1-carboxyvinyl)-3-phosphoshikimate + phosphate. It participates in metabolic intermediate biosynthesis; chorismate biosynthesis; chorismate from D-erythrose 4-phosphate and phosphoenolpyruvate: step 6/7. Its function is as follows. Catalyzes the transfer of the enolpyruvyl moiety of phosphoenolpyruvate (PEP) to the 5-hydroxyl of shikimate-3-phosphate (S3P) to produce enolpyruvyl shikimate-3-phosphate and inorganic phosphate. In Streptococcus equi subsp. zooepidemicus (strain H70), this protein is 3-phosphoshikimate 1-carboxyvinyltransferase.